The chain runs to 124 residues: uncharacterized protein (124 aa).

As to quaternary structure, interacts with dil1.

This is an uncharacterized protein from Schizosaccharomyces pombe (strain 972 / ATCC 24843) (Fission yeast).